The sequence spans 511 residues: Maturase K (511 aa).

This sequence belongs to the intron maturase 2 family. MatK subfamily.

The protein localises to the plastid. It localises to the chloroplast. Usually encoded in the trnK tRNA gene intron. Probably assists in splicing its own and other chloroplast group II introns. The protein is Maturase K of Anchomanes difformis (Amorphophallus difformis).